We begin with the raw amino-acid sequence, 283 residues long: Acetyl-coenzyme A carboxylase carboxyl transferase subunit beta (283 aa).

Residues 29–283 (LWISCPKCQQ…VKIHSMKGAF (255 aa)) enclose the CoA carboxyltransferase N-terminal domain. Positions 33, 36, 51, and 54 each coordinate Zn(2+). The segment at 33–54 (CPKCQQSIYHKDLGKYKTCPNC) adopts a C4-type zinc-finger fold.

It belongs to the AccD/PCCB family. In terms of assembly, acetyl-CoA carboxylase is a heterohexamer composed of biotin carboxyl carrier protein (AccB), biotin carboxylase (AccC) and two subunits each of ACCase subunit alpha (AccA) and ACCase subunit beta (AccD). Zn(2+) is required as a cofactor.

The protein localises to the cytoplasm. It carries out the reaction N(6)-carboxybiotinyl-L-lysyl-[protein] + acetyl-CoA = N(6)-biotinyl-L-lysyl-[protein] + malonyl-CoA. It functions in the pathway lipid metabolism; malonyl-CoA biosynthesis; malonyl-CoA from acetyl-CoA: step 1/1. Its function is as follows. Component of the acetyl coenzyme A carboxylase (ACC) complex. Biotin carboxylase (BC) catalyzes the carboxylation of biotin on its carrier protein (BCCP) and then the CO(2) group is transferred by the transcarboxylase to acetyl-CoA to form malonyl-CoA. This is Acetyl-coenzyme A carboxylase carboxyl transferase subunit beta from Ligilactobacillus salivarius (strain UCC118) (Lactobacillus salivarius).